The following is a 1339-amino-acid chain: Aldehyde oxidase 1 (1339 aa).

Positions 5-92 (SELLFYVNGR…GAAVTTVEGI (88 aa)) constitute a 2Fe-2S ferredoxin-type domain. Residues Cys-44, Cys-49, Cys-52, and Cys-74 each contribute to the [2Fe-2S] cluster site. Gln-113 serves as a coordination point for Mo-molybdopterin. [2Fe-2S] cluster-binding residues include Cys-114, Cys-117, Cys-149, and Cys-151. Residue Cys-151 coordinates Mo-molybdopterin. The region spanning 236–421 (FGSDRMTWIS…ISVNIPYSRK (186 aa)) is the FAD-binding PCMH-type domain. FAD is bound by residues 264-271 (VVMGNTSV), Ala-345, Ser-354, His-358, Asp-367, and Leu-411. Mo-molybdopterin is bound by residues 807-808 (AF) and Met-1048. Ser-1069 carries the phosphoserine modification. Residues 1089-1092 (GSVV), Gln-1204, and Leu-1269 each bind Mo-molybdopterin. Glu-1271 functions as the Proton acceptor; for azaheterocycle hydroxylase activity in the catalytic mechanism.

The protein belongs to the xanthine dehydrogenase family. Homodimer. [2Fe-2S] cluster is required as a cofactor. FAD serves as cofactor. Requires Mo-molybdopterin as cofactor. The N-terminus is blocked. In terms of tissue distribution, expressed at high levels in liver, lung and spleen. Also expressed in kindey, eye, testis, duodenum, esophagus and thymus (at protein level).

The protein resides in the cytoplasm. The enzyme catalyses an aldehyde + O2 + H2O = a carboxylate + H2O2 + H(+). The catalysed reaction is retinal + O2 + H2O = retinoate + H2O2 + H(+). Functionally, oxidase with broad substrate specificity, oxidizing aromatic azaheterocycles, such as N1-methylnicotinamide, N-methylphthalazinium and phthalazine, as well as aldehydes, such as benzaldehyde, retinal, pyridoxal, and vanillin. Plays a key role in the metabolism of xenobiotics and drugs containing aromatic azaheterocyclic substituents. Is probably involved in the regulation of reactive oxygen species homeostasis. May be a prominent source of superoxide generation via the one-electron reduction of molecular oxygen. May also catalyze nitric oxide (NO) production via the reduction of nitrite to NO with NADH or aldehyde as electron donor. May play a role in adipogenesis. In Bos taurus (Bovine), this protein is Aldehyde oxidase 1.